We begin with the raw amino-acid sequence, 102 residues long: Small ribosomal subunit protein eS24 (102 aa).

It belongs to the eukaryotic ribosomal protein eS24 family.

In Halorubrum lacusprofundi (strain ATCC 49239 / DSM 5036 / JCM 8891 / ACAM 34), this protein is Small ribosomal subunit protein eS24.